The sequence spans 219 residues: 7-cyano-7-deazaguanine synthase (219 aa).

ATP is bound at residue 10 to 20; sequence FSGGQDSTTCL. Positions 186, 195, 198, and 201 each coordinate Zn(2+).

It belongs to the QueC family. Homodimer. Zn(2+) serves as cofactor.

The enzyme catalyses 7-carboxy-7-deazaguanine + NH4(+) + ATP = 7-cyano-7-deazaguanine + ADP + phosphate + H2O + H(+). It participates in purine metabolism; 7-cyano-7-deazaguanine biosynthesis. In terms of biological role, catalyzes the ATP-dependent conversion of 7-carboxy-7-deazaguanine (CDG) to 7-cyano-7-deazaguanine (preQ(0)). This Bacillus velezensis (strain DSM 23117 / BGSC 10A6 / LMG 26770 / FZB42) (Bacillus amyloliquefaciens subsp. plantarum) protein is 7-cyano-7-deazaguanine synthase.